Consider the following 475-residue polypeptide: Probable sensor histidine kinase TcrY (475 aa).

Residues 1 to 153 are Extracellular-facing; sequence MGITAATEMA…NVDATMLQML (153 aa). Residues 154 to 174 form a helical membrane-spanning segment; the sequence is IIFGIVTVIALVAATTAGIVI. Residues 175–475 lie on the Cytoplasmic side of the membrane; the sequence is IKRALAPLRR…GWQPLESSPR (301 aa). The region spanning 176–238 is the HAMP domain; the sequence is KRALAPLRRV…MLDHIAAALS (63 aa). The region spanning 253–466 is the Histidine kinase domain; that stretch reads DASHELRTPL…EFAVRLPLDG (214 aa). The residue at position 256 (His256) is a Phosphohistidine; by autocatalysis.

In terms of assembly, homodimer. It depends on a divalent metal cation as a cofactor. Autophosphorylated.

The protein resides in the cell membrane. The catalysed reaction is ATP + protein L-histidine = ADP + protein N-phospho-L-histidine.. Member of the two-component regulatory system TcrY/TcrX. Activates TcrX by phosphorylation. The protein is Probable sensor histidine kinase TcrY (tcrY) of Mycobacterium tuberculosis (strain ATCC 25618 / H37Rv).